The chain runs to 704 residues: RCC1 domain-containing protein DDB_G0295713 (704 aa).

RCC1 repeat units follow at residues 1–48 (MYCW…VKGE) and 69–120 (KNRC…ITDQ). The segment at 221-246 (YNNNNNNNNNNNNNNNNNNNNNNNNN) is disordered. The span at 222–246 (NNNNNNNNNNNNNNNNNNNNNNNNN) shows a compositional bias: low complexity. Residues 298-348 (QNQVYGWGENLNGQLGIEGIDYSTEPILIELPLVEIKHISSGAYHSAFVTN) form an RCC1 3 repeat. The segment covering 412–431 (IKDKNENNETKHTNKNKDNH) has biased composition (basic and acidic residues). Residues 412-458 (IKDKNENNETKHTNKNKDNHDDDDESDHSDDDHHDDDDNDKDSQGIN) form a disordered region. A compositionally biased stretch (acidic residues) spans 432–451 (DDDDESDHSDDDHHDDDDND). Residues 668–698 (IEQTSTQVANSENENENEIEMKMKMKKNEMK) are a coiled coil.

The polypeptide is RCC1 domain-containing protein DDB_G0295713 (Dictyostelium discoideum (Social amoeba)).